The chain runs to 226 residues: Urease accessory protein UreF (226 aa).

It belongs to the UreF family. As to quaternary structure, ureD, UreF and UreG form a complex that acts as a GTP-hydrolysis-dependent molecular chaperone, activating the urease apoprotein by helping to assemble the nickel containing metallocenter of UreC. The UreE protein probably delivers the nickel.

The protein resides in the cytoplasm. Required for maturation of urease via the functional incorporation of the urease nickel metallocenter. This is Urease accessory protein UreF from Janthinobacterium sp. (strain Marseille) (Minibacterium massiliensis).